Here is a 288-residue protein sequence, read N- to C-terminus: Protoheme IX farnesyltransferase (288 aa).

Transmembrane regions (helical) follow at residues Ile8–Ala28, Val35–Phe55, Ile75–Leu95, Phe105–Leu125, Ser130–Cys150, Phe161–Val181, Ile205–Gly225, Asn230–Phe250, and Ile265–Lys285.

It belongs to the UbiA prenyltransferase family. Protoheme IX farnesyltransferase subfamily.

It is found in the cell membrane. It catalyses the reaction heme b + (2E,6E)-farnesyl diphosphate + H2O = Fe(II)-heme o + diphosphate. The protein operates within porphyrin-containing compound metabolism; heme O biosynthesis; heme O from protoheme: step 1/1. Its function is as follows. Converts heme B (protoheme IX) to heme O by substitution of the vinyl group on carbon 2 of heme B porphyrin ring with a hydroxyethyl farnesyl side group. In Wigglesworthia glossinidia brevipalpis, this protein is Protoheme IX farnesyltransferase.